A 441-amino-acid chain; its full sequence is tRNA (adenine(37)-N6)-methyltransferase (441 aa).

Residues 30–168 (TEPVGYLESC…YIAEYDSPQN (139 aa)) form the TsaA-like domain. S-adenosyl-L-methionine is bound by residues 47–49 (PRQ), 90–91 (HK), arginine 117, leucine 127, and 148–151 (IHGT). The segment covering 179–192 (QNNQHTPNTVSQSD) has biased composition (polar residues). Disordered stretches follow at residues 179 to 231 (QNNQ…EENY) and 264 to 284 (SSVAEEQIGPYCPEKSFSEKG).

It belongs to the tRNA methyltransferase O family.

It catalyses the reaction N(6)-L-threonylcarbamoyladenosine(37) in tRNA + S-adenosyl-L-methionine = N(6)-methyl,N(6)-L-threonylcarbamoyladenosine(37) in tRNA + S-adenosyl-L-homocysteine + H(+). Functionally, S-adenosyl-L-methionine-dependent methyltransferase responsible for the addition of the methyl group in the formation of N6-methyl-N6-threonylcarbamoyladenosine at position 37 (m(6)t(6)A37) of the tRNA anticodon loop of tRNA(Ser)(GCU). The methyl group of m(6)t(6)A37 may improve the efficiency of the tRNA decoding ability. In Homo sapiens (Human), this protein is tRNA (adenine(37)-N6)-methyltransferase.